We begin with the raw amino-acid sequence, 942 residues long: Apolipoprotein B receptor (942 aa).

Disordered stretches follow at residues 66 to 212 (GLRS…VTED), 240 to 269 (ERMVPMRDGERARAQGTQCPGAESEDQAML), 283 to 487 (DSLG…SPER), 501 to 607 (AGPE…VPWE), and 671 to 942 (EGRG…PKPQ). Basic and acidic residues-rich tracts occupy residues 106–123 (QAERQDTGSWKAAEDARG), 132–143 (PEAEPGTHRDRS), 240–252 (ERMVPMRDGERAR), 312–330 (EADKGDQQDEVDEKREAEV), and 338–352 (EAERTGEMTEGHIAE). The span at 353 to 370 (EEAMGEQETEGSFEDEER) shows a compositional bias: acidic residues. At Ser364 the chain carries Phosphoserine. The span at 384-397 (EEVRAEESSREKRN) shows a compositional bias: basic and acidic residues. Positions 415-425 (PDWEDSPEVST) are enriched in acidic residues. Basic and acidic residues-rich tracts occupy residues 444–458 (LRVKVTEGQDPELVR) and 466–475 (QLEEGQKGQE). Phosphoserine is present on residues Ser484 and Ser520. 2 stretches are compositionally biased toward basic and acidic residues: residues 514-531 (GVDRRNSQEVKADAEAGK) and 672-687 (GRGEAGRGTELEETTE). Positions 709 to 721 (QEIDGTEEGEQAE) are enriched in acidic residues. Residues 837–853 (SRLDVSVPRSRVLLSRS) show a composition bias toward low complexity. Positions 854–863 (SSRRRSRPSF) are enriched in basic residues.

Homodimer. Post-translationally, there are 2 forms in macrophages, the membrane-binding proteins 200 kDa (MBP 200) and 235 kDa (MBP 235), that can be reduced into a single active ligand-binding species with intermediate mobility (MBP 200R). Highly expressed in spleen, lung and skeletal muscle, and weakly in brain, heart, kidney, and testis.

It localises to the cell membrane. In terms of biological role, macrophage receptor that binds to the apolipoprotein B48 (APOB) of dietary triglyceride (TG)-rich lipoproteins (TRL) or to a like domain of APOB in hypertriglyceridemic very low density lipoprotein (HTG-VLDL). Binds and internalizes TRL when out of the context of the macrophage. May provide essential lipids to reticuloendothelial cells. Could also be involved in foam cell formation with elevated TRL and remnant lipoprotein (RLP). Mediates the rapid high-affinity uptake of chylomicrons (CM), HTG-VLDL, and trypsinized (tryp) VLDL devoid of APOE in vitro in macrophages. This chain is Apolipoprotein B receptor, found in Mus musculus (Mouse).